Here is a 565-residue protein sequence, read N- to C-terminus: Membrane protein insertase YidC (565 aa).

6 helical membrane passes run Val-6 to Asn-26, Leu-348 to His-368, Trp-370 to Ala-390, Gly-437 to Val-457, Pro-479 to Pro-499, and Pro-516 to Ile-536.

The protein belongs to the OXA1/ALB3/YidC family. Type 1 subfamily. As to quaternary structure, interacts with the Sec translocase complex via SecD. Specifically interacts with transmembrane segments of nascent integral membrane proteins during membrane integration.

Its subcellular location is the cell inner membrane. Its function is as follows. Required for the insertion and/or proper folding and/or complex formation of integral membrane proteins into the membrane. Involved in integration of membrane proteins that insert both dependently and independently of the Sec translocase complex, as well as at least some lipoproteins. Aids folding of multispanning membrane proteins. This is Membrane protein insertase YidC from Xylella fastidiosa (strain M12).